We begin with the raw amino-acid sequence, 125 residues long: Large ribosomal subunit protein bL12 (125 aa).

Belongs to the bacterial ribosomal protein bL12 family. Homodimer. Part of the ribosomal stalk of the 50S ribosomal subunit. Forms a multimeric L10(L12)X complex, where L10 forms an elongated spine to which 2 to 4 L12 dimers bind in a sequential fashion. Binds GTP-bound translation factors.

Functionally, forms part of the ribosomal stalk which helps the ribosome interact with GTP-bound translation factors. Is thus essential for accurate translation. This chain is Large ribosomal subunit protein bL12, found in Helicobacter acinonychis (strain Sheeba).